Consider the following 771-residue polypeptide: Assimilatory nitrate reductase electron transfer subunit (771 aa).

43-79 lines the FAD pocket; the sequence is YNRILLSSVLQGEASLDDITLNSKDWYDKHGITLYTG. Positions 414, 416, 449, and 452 each coordinate [2Fe-2S] cluster.

Requires FAD as cofactor. The cofactor is [2Fe-2S] cluster.

Its function is as follows. Required for nitrate assimilation. The protein is Assimilatory nitrate reductase electron transfer subunit (nasB) of Bacillus subtilis (strain 168).